Consider the following 458-residue polypeptide: V-type sodium ATPase subunit B (458 aa).

The protein belongs to the ATPase alpha/beta chains family.

Functionally, involved in ATP-driven sodium extrusion. In Enterococcus hirae (strain ATCC 9790 / DSM 20160 / JCM 8729 / LMG 6399 / NBRC 3181 / NCIMB 6459 / NCDO 1258 / NCTC 12367 / WDCM 00089 / R), this protein is V-type sodium ATPase subunit B (ntpB).